We begin with the raw amino-acid sequence, 144 residues long: Large ribosomal subunit protein uL15 (144 aa).

Residues 1-58 (MRLNTLAPAAGSKHAPKRVGRGIGSGLGKTGGRGHKGQKSRSGGKVRPGFEGGQMPLK) form a disordered region. Residues 21–31 (RGIGSGLGKTG) show a composition bias toward gly residues. A compositionally biased stretch (basic residues) spans 32–44 (GRGHKGQKSRSGG).

It belongs to the universal ribosomal protein uL15 family. In terms of assembly, part of the 50S ribosomal subunit.

In terms of biological role, binds to the 23S rRNA. In Vibrio parahaemolyticus serotype O3:K6 (strain RIMD 2210633), this protein is Large ribosomal subunit protein uL15.